Reading from the N-terminus, the 532-residue chain is Probable 1,4-beta-D-glucan cellobiohydrolase B (532 aa).

Positions 1-26 (MLASTFSYRMYKTALILAALLGSGQA) are cleaved as a signal peptide. Residues 27-461 (QQVGTSQAEV…SNIKVGPIGS (435 aa)) form a catalytic region. E238 acts as the Nucleophile in catalysis. Catalysis depends on E243, which acts as the Proton donor. The N-linked (GlcNAc...) asparagine glycan is linked to N296. The disordered stretch occupies residues 462-495 (TFNSGGSNPGGGTTTTTTTQPTTTTTTAGNPGGT). Residues 462-496 (TFNSGGSNPGGGTTTTTTTQPTTTTTTAGNPGGTG) are thr-rich linker. A compositionally biased stretch (low complexity) spans 475-490 (TTTTTTQPTTTTTTAG). Residues 496–532 (GVAQHYGQCGGIGWTGPTTCASPYTCQKLNDYYSQCL) enclose the CBM1 domain. 2 disulfide bridges follow: C504/C521 and C515/C531.

Belongs to the glycosyl hydrolase 7 (cellulase C) family.

The protein localises to the secreted. The enzyme catalyses Hydrolysis of (1-&gt;4)-beta-D-glucosidic linkages in cellulose and cellotetraose, releasing cellobiose from the non-reducing ends of the chains.. Functionally, the biological conversion of cellulose to glucose generally requires three types of hydrolytic enzymes: (1) Endoglucanases which cut internal beta-1,4-glucosidic bonds; (2) Exocellobiohydrolases that cut the disaccharide cellobiose from the non-reducing end of the cellulose polymer chain; (3) Beta-1,4-glucosidases which hydrolyze the cellobiose and other short cello-oligosaccharides to glucose. The chain is Probable 1,4-beta-D-glucan cellobiohydrolase B (cbhB) from Aspergillus fumigatus (strain CBS 144.89 / FGSC A1163 / CEA10) (Neosartorya fumigata).